The sequence spans 136 residues: MKSQFKANVLAILLVSLFLINGLVFLSKTLFKLFNFRVTHSLNNYYTFNLLIKAWRSIKNDFSSLNNFVFFIERQVHNFIGLLIEQPSIEEDNQPEVIEETPKLEIVVVIEKEVINSKLSDYFCFFKYRSLFFELR.

A helical transmembrane segment spans residues A7–S27.

Its subcellular location is the membrane. This is an uncharacterized protein from Mycoplasma pneumoniae (strain ATCC 29342 / M129 / Subtype 1) (Mycoplasmoides pneumoniae).